The primary structure comprises 1795 residues: Putative surface cell antigen sca2 (1795 aa).

Positions M1 to A33 are cleaved as a signal peptide. The segment covering F360–R373 has biased composition (polar residues). Disordered stretches follow at residues F360–S391, L664–S709, and K1354–L1441. Over residues P672–L700 the composition is skewed to pro residues. Composition is skewed to basic and acidic residues over residues S1364–D1383 and S1398–S1409. Positions D1417–E1432 are enriched in acidic residues. In terms of domain architecture, Autotransporter spans E1516 to L1795.

The protein localises to the cell outer membrane. In Rickettsia conorii (strain ATCC VR-613 / Malish 7), this protein is Putative surface cell antigen sca2 (sca2).